Consider the following 152-residue polypeptide: UPF0266 membrane protein YobD (152 aa).

3 helical membrane-spanning segments follow: residues 6-26, 45-65, and 67-87; these read LVLI…QFIM, IDSV…VTNH, and ALIT…IFWI.

This sequence belongs to the UPF0266 family.

It localises to the cell inner membrane. This is UPF0266 membrane protein YobD from Shigella boydii serotype 18 (strain CDC 3083-94 / BS512).